The primary structure comprises 202 residues: Orotate phosphoribosyltransferase (202 aa).

Residues Lys93 and 113–121 contribute to the 5-phospho-alpha-D-ribose 1-diphosphate site; that span reads EDIITTGGS. Residues Thr117 and Arg145 each contribute to the orotate site.

It belongs to the purine/pyrimidine phosphoribosyltransferase family. PyrE subfamily. Homodimer. It depends on Mg(2+) as a cofactor.

The enzyme catalyses orotidine 5'-phosphate + diphosphate = orotate + 5-phospho-alpha-D-ribose 1-diphosphate. It functions in the pathway pyrimidine metabolism; UMP biosynthesis via de novo pathway; UMP from orotate: step 1/2. Catalyzes the transfer of a ribosyl phosphate group from 5-phosphoribose 1-diphosphate to orotate, leading to the formation of orotidine monophosphate (OMP). The polypeptide is Orotate phosphoribosyltransferase (Campylobacter concisus (strain 13826)).